The following is a 488-amino-acid chain: Proline--tRNA ligase (488 aa).

Belongs to the class-II aminoacyl-tRNA synthetase family. ProS type 3 subfamily. Homodimer.

It localises to the cytoplasm. It carries out the reaction tRNA(Pro) + L-proline + ATP = L-prolyl-tRNA(Pro) + AMP + diphosphate. Catalyzes the attachment of proline to tRNA(Pro) in a two-step reaction: proline is first activated by ATP to form Pro-AMP and then transferred to the acceptor end of tRNA(Pro). This chain is Proline--tRNA ligase, found in Pyrobaculum arsenaticum (strain DSM 13514 / JCM 11321 / PZ6).